A 399-amino-acid chain; its full sequence is Probable tRNA sulfurtransferase (399 aa).

One can recognise a THUMP domain in the interval 60-165; sequence YAVMERLKRV…TEGTYISCET (106 aa). Residues 183–184, 208–209, R265, G287, and Q296 contribute to the ATP site; these read LL and HF.

The protein belongs to the ThiI family.

Its subcellular location is the cytoplasm. The catalysed reaction is [ThiI sulfur-carrier protein]-S-sulfanyl-L-cysteine + a uridine in tRNA + 2 reduced [2Fe-2S]-[ferredoxin] + ATP + H(+) = [ThiI sulfur-carrier protein]-L-cysteine + a 4-thiouridine in tRNA + 2 oxidized [2Fe-2S]-[ferredoxin] + AMP + diphosphate. The enzyme catalyses [ThiS sulfur-carrier protein]-C-terminal Gly-Gly-AMP + S-sulfanyl-L-cysteinyl-[cysteine desulfurase] + AH2 = [ThiS sulfur-carrier protein]-C-terminal-Gly-aminoethanethioate + L-cysteinyl-[cysteine desulfurase] + A + AMP + 2 H(+). It participates in cofactor biosynthesis; thiamine diphosphate biosynthesis. Functionally, catalyzes the ATP-dependent transfer of a sulfur to tRNA to produce 4-thiouridine in position 8 of tRNAs, which functions as a near-UV photosensor. Also catalyzes the transfer of sulfur to the sulfur carrier protein ThiS, forming ThiS-thiocarboxylate. This is a step in the synthesis of thiazole, in the thiamine biosynthesis pathway. The sulfur is donated as persulfide by IscS. In Brevibacillus brevis (strain 47 / JCM 6285 / NBRC 100599), this protein is Probable tRNA sulfurtransferase.